The sequence spans 535 residues: SIR4-interacting protein SIF2 (535 aa).

The 33-residue stretch at 4–36 (TSEELNYLIWRYCQEMGHEVSALALQDETRVLE) folds into the LisH domain. The interval 104–140 (EGRFTLETNSESNKAGEDGASTVERETQEDDTNSIDS) is disordered. The segment covering 130 to 140 (TQEDDTNSIDS) has biased composition (acidic residues). Residue S137 is modified to Phosphoserine. 8 WD repeats span residues 155-186 (VKLD…RLAR), 218-248 (KTTN…RLWN), 259-289 (FHRA…ILWN), 316-345 (GDGS…FVYQ), 357-387 (GHHG…RIWH), 399-428 (GHSQ…RLWS), 440-470 (VDGV…NVYD), and 503-534 (SQDN…SVVA).

In terms of assembly, homotetramer. Interacts with SIR4 N-terminal domain. Interacts with a complex composed of SIN3 and RPD3. Identified in the Set3C complex with HOS2, HST1, SNT1, CPR1, HOS4/YIL112W and SET3.

Its subcellular location is the nucleus. Functionally, antagonizes telomeric silencing in yeast. May recruit SIR4 to non-telomeric sites or repression. This chain is SIR4-interacting protein SIF2 (SIF2), found in Saccharomyces cerevisiae (strain ATCC 204508 / S288c) (Baker's yeast).